The sequence spans 122 residues: Large ribosomal subunit protein uL14c (122 aa).

Belongs to the universal ribosomal protein uL14 family. As to quaternary structure, part of the 50S ribosomal subunit.

The protein localises to the plastid. It is found in the chloroplast. Functionally, binds to 23S rRNA. This Nandina domestica (Heavenly bamboo) protein is Large ribosomal subunit protein uL14c.